Here is a 245-residue protein sequence, read N- to C-terminus: 1-(5-phosphoribosyl)-5-[(5-phosphoribosylamino)methylideneamino] imidazole-4-carboxamide isomerase (245 aa).

Catalysis depends on aspartate 7, which acts as the Proton acceptor. The active-site Proton donor is aspartate 129.

This sequence belongs to the HisA/HisF family.

It localises to the cytoplasm. It carries out the reaction 1-(5-phospho-beta-D-ribosyl)-5-[(5-phospho-beta-D-ribosylamino)methylideneamino]imidazole-4-carboxamide = 5-[(5-phospho-1-deoxy-D-ribulos-1-ylimino)methylamino]-1-(5-phospho-beta-D-ribosyl)imidazole-4-carboxamide. It functions in the pathway amino-acid biosynthesis; L-histidine biosynthesis; L-histidine from 5-phospho-alpha-D-ribose 1-diphosphate: step 4/9. The sequence is that of 1-(5-phosphoribosyl)-5-[(5-phosphoribosylamino)methylideneamino] imidazole-4-carboxamide isomerase from Psychromonas ingrahamii (strain DSM 17664 / CCUG 51855 / 37).